The primary structure comprises 350 residues: Protein RecA (350 aa).

Residue 68–75 (GPESSGKT) coordinates ATP.

This sequence belongs to the RecA family.

It is found in the cytoplasm. Can catalyze the hydrolysis of ATP in the presence of single-stranded DNA, the ATP-dependent uptake of single-stranded DNA by duplex DNA, and the ATP-dependent hybridization of homologous single-stranded DNAs. It interacts with LexA causing its activation and leading to its autocatalytic cleavage. This Symbiobacterium thermophilum (strain DSM 24528 / JCM 14929 / IAM 14863 / T) protein is Protein RecA.